A 644-amino-acid polypeptide reads, in one-letter code: Exoribonuclease 2 (644 aa).

Positions R189 to T516 constitute an RNB domain. The 83-residue stretch at D561 to V643 folds into the S1 motif domain.

The protein belongs to the RNR ribonuclease family. RNase II subfamily.

The protein resides in the cytoplasm. The catalysed reaction is Exonucleolytic cleavage in the 3'- to 5'-direction to yield nucleoside 5'-phosphates.. Involved in mRNA degradation. Hydrolyzes single-stranded polyribonucleotides processively in the 3' to 5' direction. This Yersinia pseudotuberculosis serotype IB (strain PB1/+) protein is Exoribonuclease 2.